Consider the following 1341-residue polypeptide: DNA-directed RNA polymerase subunit beta (1341 aa).

Belongs to the RNA polymerase beta chain family. The RNAP catalytic core consists of 2 alpha, 1 beta, 1 beta' and 1 omega subunit. When a sigma factor is associated with the core the holoenzyme is formed, which can initiate transcription.

The enzyme catalyses RNA(n) + a ribonucleoside 5'-triphosphate = RNA(n+1) + diphosphate. Its function is as follows. DNA-dependent RNA polymerase catalyzes the transcription of DNA into RNA using the four ribonucleoside triphosphates as substrates. In Blochmanniella pennsylvanica (strain BPEN), this protein is DNA-directed RNA polymerase subunit beta.